Here is a 232-residue protein sequence, read N- to C-terminus: Large ribosomal subunit protein uL1 (232 aa).

It belongs to the universal ribosomal protein uL1 family. Part of the 50S ribosomal subunit.

Its function is as follows. Binds directly to 23S rRNA. The L1 stalk is quite mobile in the ribosome, and is involved in E site tRNA release. Functionally, protein L1 is also a translational repressor protein, it controls the translation of the L11 operon by binding to its mRNA. In Bordetella bronchiseptica (strain ATCC BAA-588 / NCTC 13252 / RB50) (Alcaligenes bronchisepticus), this protein is Large ribosomal subunit protein uL1.